A 201-amino-acid polypeptide reads, in one-letter code: MAAAGSCSSAGKSLLQFMKLVGQLKRVPRTGWIYRQVEKPESVSDHMYRMAVMAMLTEDRKLNKDRCIRLALVHDMAECIVGDIAPADNIAKEEKHRKEKAAMEHLTQLLPDNLKTEVYDLWEEYEHQFTAEAKFVKELDQCEMILQALEYEELEKRPGRLQDFYNSTAGKFKHPEIVQLVSAIYEERNSAIAENARTSQT.

Residues Val43–Ile145 form the HD domain. 7 residues coordinate a divalent metal cation: His46, His74, Asp75, Glu78, Asp83, Ile84, and Asp140.

This sequence belongs to the HDDC2 family. As to quaternary structure, homodimer. Mn(2+) is required as a cofactor. Requires Co(2+) as cofactor. The cofactor is Mg(2+).

The enzyme catalyses a 2'-deoxyribonucleoside 5'-phosphate + H2O = a 2'-deoxyribonucleoside + phosphate. In terms of biological role, catalyzes the dephosphorylation of the nucleoside 5'-monophosphates deoxyadenosine monophosphate (dAMP), deoxycytidine monophosphate (dCMP), deoxyguanosine monophosphate (dGMP) and deoxythymidine monophosphate (dTMP). This Xenopus laevis (African clawed frog) protein is 5'-deoxynucleotidase HDDC2 (hddc2).